Here is a 365-residue protein sequence, read N- to C-terminus: Caffeic acid 3-O-methyltransferase 1 (365 aa).

130–136 (MNQDKVL) is a binding site for substrate. A substrate binding region spans residues 162-180 (AFEYHGTDPRFNKVFNKGM). The S-adenosyl-L-methionine site is built by G208, D231, D251, M252, and K265. Residue H269 is the Proton acceptor of the active site.

Belongs to the class I-like SAM-binding methyltransferase superfamily. Cation-independent O-methyltransferase family. COMT subfamily. Homodimer.

It carries out the reaction (E)-caffeate + S-adenosyl-L-methionine = (E)-ferulate + S-adenosyl-L-homocysteine + H(+). The protein operates within aromatic compound metabolism; phenylpropanoid biosynthesis. In terms of biological role, catalyzes the conversion of caffeic acid to ferulic acid and of 5-hydroxyferulic acid to sinapic acid. The resulting products may subsequently be converted to the corresponding alcohols that are incorporated into lignins. The chain is Caffeic acid 3-O-methyltransferase 1 (HOMT1) from Populus kitakamiensis (Aspen).